Reading from the N-terminus, the 253-residue chain is Large ribosomal subunit protein uL4 (253 aa).

Residues 78–107 (SRAARVPHAKGGRRAHPPKPEADRSEKVNT) are disordered. The segment covering 82–94 (RVPHAKGGRRAHP) has biased composition (basic residues). A compositionally biased stretch (basic and acidic residues) spans 95–107 (PKPEADRSEKVNT).

The protein belongs to the universal ribosomal protein uL4 family. Part of the 50S ribosomal subunit.

In terms of biological role, one of the primary rRNA binding proteins, this protein initially binds near the 5'-end of the 23S rRNA. It is important during the early stages of 50S assembly. It makes multiple contacts with different domains of the 23S rRNA in the assembled 50S subunit and ribosome. Its function is as follows. Forms part of the polypeptide exit tunnel. This Methanosarcina acetivorans (strain ATCC 35395 / DSM 2834 / JCM 12185 / C2A) protein is Large ribosomal subunit protein uL4.